A 160-amino-acid polypeptide reads, in one-letter code: 2-C-methyl-D-erythritol 2,4-cyclodiphosphate synthase (160 aa).

The a divalent metal cation site is built by D9 and H11. 4-CDP-2-C-methyl-D-erythritol 2-phosphate is bound by residues 9–11 and 35–36; these read DVH and HS. An a divalent metal cation-binding site is contributed by H43. Residues 57–59, 62–66, 101–107, 133–136, F140, and R143 contribute to the 4-CDP-2-C-methyl-D-erythritol 2-phosphate site; these read DIG, FPDTD, AQKPKMA, and TTTE.

The protein belongs to the IspF family. In terms of assembly, homotrimer. Requires a divalent metal cation as cofactor.

It carries out the reaction 4-CDP-2-C-methyl-D-erythritol 2-phosphate = 2-C-methyl-D-erythritol 2,4-cyclic diphosphate + CMP. It participates in isoprenoid biosynthesis; isopentenyl diphosphate biosynthesis via DXP pathway; isopentenyl diphosphate from 1-deoxy-D-xylulose 5-phosphate: step 4/6. Its function is as follows. Involved in the biosynthesis of isopentenyl diphosphate (IPP) and dimethylallyl diphosphate (DMAPP), two major building blocks of isoprenoid compounds. Catalyzes the conversion of 4-diphosphocytidyl-2-C-methyl-D-erythritol 2-phosphate (CDP-ME2P) to 2-C-methyl-D-erythritol 2,4-cyclodiphosphate (ME-CPP) with a corresponding release of cytidine 5-monophosphate (CMP). This chain is 2-C-methyl-D-erythritol 2,4-cyclodiphosphate synthase, found in Geobacillus thermodenitrificans (strain NG80-2).